An 889-amino-acid polypeptide reads, in one-letter code: DNA gyrase subunit A (889 aa).

The Topo IIA-type catalytic domain maps to 35–501 (LPDVRDGLKP…GFEDLEDEDL (467 aa)). Catalysis depends on Y123, which acts as the O-(5'-phospho-DNA)-tyrosine intermediate. The GyrA-box motif lies at 528 to 534 (QNRGGRG). A disordered region spans residues 811–889 (KEDAEDETNE…IQQSSDEDEE (79 aa)). A compositionally biased stretch (acidic residues) spans 813-823 (DAEDETNEDEQ). Basic and acidic residues predominate over residues 863-875 (DGRIEVRQDFMDR). The span at 876–889 (VEEDIQQSSDEDEE) shows a compositional bias: acidic residues.

This sequence belongs to the type II topoisomerase GyrA/ParC subunit family. Heterotetramer, composed of two GyrA and two GyrB chains. In the heterotetramer, GyrA contains the active site tyrosine that forms a transient covalent intermediate with DNA, while GyrB binds cofactors and catalyzes ATP hydrolysis.

Its subcellular location is the cytoplasm. The enzyme catalyses ATP-dependent breakage, passage and rejoining of double-stranded DNA.. Functionally, a type II topoisomerase that negatively supercoils closed circular double-stranded (ds) DNA in an ATP-dependent manner to modulate DNA topology and maintain chromosomes in an underwound state. Negative supercoiling favors strand separation, and DNA replication, transcription, recombination and repair, all of which involve strand separation. Also able to catalyze the interconversion of other topological isomers of dsDNA rings, including catenanes and knotted rings. Type II topoisomerases break and join 2 DNA strands simultaneously in an ATP-dependent manner. In Staphylococcus aureus (strain Mu50 / ATCC 700699), this protein is DNA gyrase subunit A.